The sequence spans 277 residues: ATP synthase subunit delta (277 aa).

It belongs to the ATPase delta chain family. F-type ATPases have 2 components, F(1) - the catalytic core - and F(0) - the membrane proton channel. F(1) has five subunits: alpha(3), beta(3), gamma(1), delta(1), epsilon(1). F(0) has three main subunits: a(1), b(2) and c(10-14). The alpha and beta chains form an alternating ring which encloses part of the gamma chain. F(1) is attached to F(0) by a central stalk formed by the gamma and epsilon chains, while a peripheral stalk is formed by the delta and b chains.

It localises to the cell membrane. Functionally, f(1)F(0) ATP synthase produces ATP from ADP in the presence of a proton or sodium gradient. F-type ATPases consist of two structural domains, F(1) containing the extramembraneous catalytic core and F(0) containing the membrane proton channel, linked together by a central stalk and a peripheral stalk. During catalysis, ATP synthesis in the catalytic domain of F(1) is coupled via a rotary mechanism of the central stalk subunits to proton translocation. Its function is as follows. This protein is part of the stalk that links CF(0) to CF(1). It either transmits conformational changes from CF(0) to CF(1) or is implicated in proton conduction. The protein is ATP synthase subunit delta of Bifidobacterium animalis subsp. lactis (strain AD011).